Here is a 430-residue protein sequence, read N- to C-terminus: Serine--tRNA ligase (430 aa).

The disordered stretch occupies residues 47–66 (AQAEQNKASKEAGAAKGRGD). An L-serine-binding site is contributed by 231–233 (TSE). 262-264 (RSE) contacts ATP. Glu285 contacts L-serine. Position 349 to 352 (349 to 352 (EISS)) interacts with ATP. Ser385 contacts L-serine.

Belongs to the class-II aminoacyl-tRNA synthetase family. Type-1 seryl-tRNA synthetase subfamily. As to quaternary structure, homodimer. The tRNA molecule binds across the dimer.

It localises to the cytoplasm. It catalyses the reaction tRNA(Ser) + L-serine + ATP = L-seryl-tRNA(Ser) + AMP + diphosphate + H(+). The catalysed reaction is tRNA(Sec) + L-serine + ATP = L-seryl-tRNA(Sec) + AMP + diphosphate + H(+). Its pathway is aminoacyl-tRNA biosynthesis; selenocysteinyl-tRNA(Sec) biosynthesis; L-seryl-tRNA(Sec) from L-serine and tRNA(Sec): step 1/1. Catalyzes the attachment of serine to tRNA(Ser). Is also able to aminoacylate tRNA(Sec) with serine, to form the misacylated tRNA L-seryl-tRNA(Sec), which will be further converted into selenocysteinyl-tRNA(Sec). In Paracoccus denitrificans (strain Pd 1222), this protein is Serine--tRNA ligase.